The following is a 477-amino-acid chain: UDP-N-acetylmuramoylalanine--D-glutamate ligase (477 aa).

125-131 is an ATP binding site; it reads GTNGKST.

Belongs to the MurCDEF family.

It localises to the cytoplasm. It catalyses the reaction UDP-N-acetyl-alpha-D-muramoyl-L-alanine + D-glutamate + ATP = UDP-N-acetyl-alpha-D-muramoyl-L-alanyl-D-glutamate + ADP + phosphate + H(+). Its pathway is cell wall biogenesis; peptidoglycan biosynthesis. Cell wall formation. Catalyzes the addition of glutamate to the nucleotide precursor UDP-N-acetylmuramoyl-L-alanine (UMA). In Rhodospirillum rubrum (strain ATCC 11170 / ATH 1.1.1 / DSM 467 / LMG 4362 / NCIMB 8255 / S1), this protein is UDP-N-acetylmuramoylalanine--D-glutamate ligase.